A 192-amino-acid chain; its full sequence is Probable nicotinate-nucleotide adenylyltransferase (192 aa).

This sequence belongs to the NadD family.

The catalysed reaction is nicotinate beta-D-ribonucleotide + ATP + H(+) = deamido-NAD(+) + diphosphate. It participates in cofactor biosynthesis; NAD(+) biosynthesis; deamido-NAD(+) from nicotinate D-ribonucleotide: step 1/1. Functionally, catalyzes the reversible adenylation of nicotinate mononucleotide (NaMN) to nicotinic acid adenine dinucleotide (NaAD). This chain is Probable nicotinate-nucleotide adenylyltransferase, found in Rhizobium etli (strain ATCC 51251 / DSM 11541 / JCM 21823 / NBRC 15573 / CFN 42).